The chain runs to 109 residues: Nucleoid-associated protein CKO_02678 (109 aa).

Positions 89 to 109 are disordered; that stretch reads KEKMASVSSGMQLPPGFKMPF.

It belongs to the YbaB/EbfC family. Homodimer.

The protein localises to the cytoplasm. Its subcellular location is the nucleoid. Functionally, binds to DNA and alters its conformation. May be involved in regulation of gene expression, nucleoid organization and DNA protection. This chain is Nucleoid-associated protein CKO_02678, found in Citrobacter koseri (strain ATCC BAA-895 / CDC 4225-83 / SGSC4696).